The primary structure comprises 200 residues: NADH-quinone oxidoreductase subunit C (200 aa).

It belongs to the complex I 30 kDa subunit family. NDH-1 is composed of 14 different subunits. Subunits NuoB, C, D, E, F, and G constitute the peripheral sector of the complex.

Its subcellular location is the cell inner membrane. It catalyses the reaction a quinone + NADH + 5 H(+)(in) = a quinol + NAD(+) + 4 H(+)(out). NDH-1 shuttles electrons from NADH, via FMN and iron-sulfur (Fe-S) centers, to quinones in the respiratory chain. The immediate electron acceptor for the enzyme in this species is believed to be ubiquinone. Couples the redox reaction to proton translocation (for every two electrons transferred, four hydrogen ions are translocated across the cytoplasmic membrane), and thus conserves the redox energy in a proton gradient. In Burkholderia cenocepacia (strain HI2424), this protein is NADH-quinone oxidoreductase subunit C.